A 135-amino-acid polypeptide reads, in one-letter code: Small ribosomal subunit protein bS6 (135 aa).

Polar residues predominate over residues 99–120 (QHSSLGRSTAPANPMASNTPRT). The interval 99–135 (QHSSLGRSTAPANPMASNTPRTEGQEQAKTEPQTAPA) is disordered.

It belongs to the bacterial ribosomal protein bS6 family.

In terms of biological role, binds together with bS18 to 16S ribosomal RNA. In Synechococcus sp. (strain RCC307), this protein is Small ribosomal subunit protein bS6.